The sequence spans 203 residues: MSDNGDNNTKSPQHNNPQPNEKSDGKVQPGQPQVNPQRKFTAGINKKKEKLNEDLSELDKLRQQLIHFQNQFRLAVADKENVKRIMQKNIDDTSIYAISNFARDLLSSCDNLETSLKNLKEGDSIHAGVLMTYKELLNTLERHNITRIDPIGEKFNPQFHKAVSQMVDAEKDDNTILHVVQPGYIIKDKLLRAASVIISKKSD.

Residues 1–20 (MSDNGDNNTKSPQHNNPQPN) are compositionally biased toward polar residues. Positions 1–46 (MSDNGDNNTKSPQHNNPQPNEKSDGKVQPGQPQVNPQRKFTAGINK) are disordered.

This sequence belongs to the GrpE family. In terms of assembly, homodimer.

It is found in the cytoplasm. Functionally, participates actively in the response to hyperosmotic and heat shock by preventing the aggregation of stress-denatured proteins, in association with DnaK and GrpE. It is the nucleotide exchange factor for DnaK and may function as a thermosensor. Unfolded proteins bind initially to DnaJ; upon interaction with the DnaJ-bound protein, DnaK hydrolyzes its bound ATP, resulting in the formation of a stable complex. GrpE releases ADP from DnaK; ATP binding to DnaK triggers the release of the substrate protein, thus completing the reaction cycle. Several rounds of ATP-dependent interactions between DnaJ, DnaK and GrpE are required for fully efficient folding. This Ehrlichia chaffeensis (strain ATCC CRL-10679 / Arkansas) protein is Protein GrpE.